A 281-amino-acid polypeptide reads, in one-letter code: Auxin-responsive protein IAA19 (281 aa).

The short motif at 40–44 (LRLGL) is the EAR-like (transcriptional repression) element. A disordered region spans residues 66 to 126 (LGPAPPPRGG…AAGAPRAAKA (61 aa)). The segment covering 79 to 91 (GFVDSLDRSEGRR) has biased composition (basic and acidic residues). Low complexity predominate over residues 114–126 (GEAAAGAPRAAKA). In terms of domain architecture, PB1 spans 161 to 265 (CCYVKVSMDG…RKLRIMRGSD (105 aa)).

This sequence belongs to the Aux/IAA family. Homodimers and heterodimers. Expressed in etiolated seedlings and flowers.

It localises to the nucleus. Its function is as follows. Aux/IAA proteins are short-lived transcriptional factors that function as repressors of early auxin response genes at low auxin concentrations. The chain is Auxin-responsive protein IAA19 (IAA19) from Oryza sativa subsp. japonica (Rice).